Consider the following 32-residue polypeptide: Parigidin-br1 (32 aa).

Positions 1–32 form a cross-link, cyclopeptide (Gly-Asp); the sequence is GGSVPCGESCVFIPCITSLAGCSCKNKVCYYD. Intrachain disulfides connect cysteine 6/cysteine 22, cysteine 10/cysteine 24, and cysteine 15/cysteine 29.

This is a cyclic peptide. As to expression, expressed in leaves, flowers, peduncles and seeds (at protein level).

In terms of biological role, probably participates in a plant defense mechanism. Reduces growth of and increases mortality in larvae of D.saccharalis. Kills cultured SF-9 cells of S.frugiperda probably by disrupting plasma membranes. Has hemolytic activity against human erythrocytes. Has no antibacterial activity against E.coli strain ATCC 8739 and S.aureus strain ATCC 25923. This Palicourea rigida protein is Parigidin-br1.